Reading from the N-terminus, the 100-residue chain is Small ribosomal subunit protein uS14 (100 aa).

Cys-63, Cys-66, Cys-79, and Cys-82 together coordinate Zn(2+).

This sequence belongs to the universal ribosomal protein uS14 family. In terms of assembly, part of the 30S ribosomal subunit. Contacts proteins S3 and S10. The cofactor is Zn(2+).

Its function is as follows. Binds 16S rRNA, required for the assembly of 30S particles and may also be responsible for determining the conformation of the 16S rRNA at the A site. The protein is Small ribosomal subunit protein uS14 (rpsN) of Legionella pneumophila (strain Paris).